The chain runs to 215 residues: Virulence protein YscR (215 aa).

The next 4 membrane-spanning stretches (helical) occupy residues 10–30, 53–73, 156–176, and 188–208; these read LIGI…GTSF, IALY…TLLA, IGLL…NILL, and ISLP…LTLA.

The protein belongs to the FliP/MopC/SpaP family.

The protein localises to the cell membrane. This is Virulence protein YscR (yscR) from Salmonella typhimurium (strain LT2 / SGSC1412 / ATCC 700720).